A 102-amino-acid polypeptide reads, in one-letter code: Protein PAPPAS (102 aa).

2 helical membrane passes run 13–33 and 82–102; these read LFLT…FVKW and IGSD…FFFF.

Expressed in placenta with lower expression in brain, kidney and testis.

Its subcellular location is the endoplasmic reticulum membrane. This chain is Protein PAPPAS (PAPPA-AS1), found in Homo sapiens (Human).